The following is a 729-amino-acid chain: Fatty acid oxidation complex subunit alpha (729 aa).

The enoyl-CoA hydratase/isomerase stretch occupies residues methionine 1–alanine 189. Aspartate 296 contributes to the substrate binding site. Residues glutamate 311–alanine 729 form a 3-hydroxyacyl-CoA dehydrogenase region. Residues methionine 324, aspartate 343, valine 400–glutamate 402, lysine 407, and serine 429 contribute to the NAD(+) site. The For 3-hydroxyacyl-CoA dehydrogenase activity role is filled by histidine 450. NAD(+) is bound at residue asparagine 453. The substrate site is built by asparagine 500 and tyrosine 660.

It in the N-terminal section; belongs to the enoyl-CoA hydratase/isomerase family. The protein in the C-terminal section; belongs to the 3-hydroxyacyl-CoA dehydrogenase family. In terms of assembly, heterotetramer of two alpha chains (FadB) and two beta chains (FadA).

It carries out the reaction a (3S)-3-hydroxyacyl-CoA + NAD(+) = a 3-oxoacyl-CoA + NADH + H(+). It catalyses the reaction a (3S)-3-hydroxyacyl-CoA = a (2E)-enoyl-CoA + H2O. The catalysed reaction is a 4-saturated-(3S)-3-hydroxyacyl-CoA = a (3E)-enoyl-CoA + H2O. The enzyme catalyses (3S)-3-hydroxybutanoyl-CoA = (3R)-3-hydroxybutanoyl-CoA. It carries out the reaction a (3Z)-enoyl-CoA = a 4-saturated (2E)-enoyl-CoA. It catalyses the reaction a (3E)-enoyl-CoA = a 4-saturated (2E)-enoyl-CoA. The protein operates within lipid metabolism; fatty acid beta-oxidation. In terms of biological role, involved in the aerobic and anaerobic degradation of long-chain fatty acids via beta-oxidation cycle. Catalyzes the formation of 3-oxoacyl-CoA from enoyl-CoA via L-3-hydroxyacyl-CoA. It can also use D-3-hydroxyacyl-CoA and cis-3-enoyl-CoA as substrate. The polypeptide is Fatty acid oxidation complex subunit alpha (Klebsiella pneumoniae (strain 342)).